The following is a 249-amino-acid chain: LexA repressor (249 aa).

The disordered stretch occupies residues 1–25 (MAAAATGGRATSQPKKTTKGLTPRQ). The H-T-H motif DNA-binding region spans 45 to 65 (MREIGDTVGLASLSSVTHQLS). Residues Ser173 and Lys210 each act as for autocatalytic cleavage activity in the active site.

This sequence belongs to the peptidase S24 family. Homodimer.

It carries out the reaction Hydrolysis of Ala-|-Gly bond in repressor LexA.. Functionally, represses a number of genes involved in the response to DNA damage (SOS response), including recA and lexA. In the presence of single-stranded DNA, RecA interacts with LexA causing an autocatalytic cleavage which disrupts the DNA-binding part of LexA, leading to derepression of the SOS regulon and eventually DNA repair. This chain is LexA repressor, found in Pseudarthrobacter chlorophenolicus (strain ATCC 700700 / DSM 12829 / CIP 107037 / JCM 12360 / KCTC 9906 / NCIMB 13794 / A6) (Arthrobacter chlorophenolicus).